We begin with the raw amino-acid sequence, 302 residues long: MRTRLWDAASAVYERLLTREIDGAPAHVAVIQDGNRRYAREHGDDPTDGYQSGARTTERVLEWCSDLGVEELTLYAFSTENFERPPDQQQHLFDLLESKLREFADADRVHADRVRIRAIGDTGRLPQRVRDAITYAESRTAGYDGFTLNVALAYGGRDELLTAARGVADAVAAGDLDPADIDAQAIESRLHTSPVRDVDLIIRTGGDERTSNFLPWHANGSEAAVFFCTPYWPEFSKVDLLRAIRTYESRAASWRQTRAKRALALVRALGSEVGEARRVLDRFKGALPDPPEDVEAETQSAD.

Asp-33 is a catalytic residue. Position 33 (Asp-33) interacts with Mg(2+). Substrate is bound by residues 34–37 (GNRR) and 78–80 (STE). The Proton acceptor role is filled by Asn-81. Substrate is bound by residues Phe-82, Arg-84, Arg-203, and 209 to 211 (RTS).

The protein belongs to the UPP synthase family. In terms of assembly, homodimer. Mg(2+) serves as cofactor.

The enzyme catalyses geranylgeranyl diphosphate + 7 isopentenyl diphosphate = tri-trans,hepta-cis-undecaprenyl diphosphate + 7 diphosphate. In terms of biological role, catalyzes the sequential condensation of isopentenyl diphosphate (IPP) with geranylgeranyl diphosphate (GGPP) to yield (2Z,6Z,10Z,14Z,18Z,22Z,26Z,30E,34E,38E)-undecaprenyl diphosphate (tritrans,heptacis-UPP). It is probably the precursor of glycosyl carrier lipids. The protein is Tritrans,polycis-undecaprenyl-diphosphate synthase (geranylgeranyl-diphosphate specific) of Halobacterium salinarum (strain ATCC 700922 / JCM 11081 / NRC-1) (Halobacterium halobium).